A 161-amino-acid chain; its full sequence is Nucleotide-binding protein Aave_1854 (161 aa).

It belongs to the YajQ family.

In terms of biological role, nucleotide-binding protein. In Paracidovorax citrulli (strain AAC00-1) (Acidovorax citrulli), this protein is Nucleotide-binding protein Aave_1854.